Consider the following 596-residue polypeptide: uncharacterized protein (596 aa).

One can recognise a Helicase ATP-binding domain in the interval 44-203 (KYLASQPRDF…PFVTYALDAD (160 aa)). Residues 285 to 432 (RLRQLRTHVP…PHRESTDNPL (148 aa)) enclose the Helicase C-terminal domain. Disordered regions lie at residues 420-444 (LGKPHRESTDNPLGGNPATMTQTEQ) and 506-533 (EQLQKRTAAQQASSTPDRTSGAPASVHG). Positions 510 to 523 (KRTAAQQASSTPDR) are enriched in polar residues.

The protein to M.tuberculosis Rv2917.

This is an uncharacterized protein from Mycobacterium leprae (strain TN).